Consider the following 582-residue polypeptide: GPI-anchor transamidase component PIGT (582 aa).

The first 25 residues, 1–25 (MAAAMPLGLPLRLLVLLLVGRGCCG), serve as a signal peptide directing secretion. Residues 26 to 529 (CAEGPRDSLR…NLPTPDFSMP (504 aa)) are Lumenal-facing. Residue asparagine 168 is glycosylated (N-linked (GlcNAc...) asparagine). Intrachain disulfides connect cysteine 199–cysteine 276 and cysteine 230–cysteine 235. 2 N-linked (GlcNAc...) asparagine glycosylation sites follow: asparagine 295 and asparagine 331. A 2-acyl-6-[6-phosphoethanolamine-alpha-D-mannosyl-(1-&gt;2)-6-phosphoethanolamine-alpha-D-mannosyl-(1-&gt;6)-2-phosphoethanolamine-alpha-D-mannosyl-(1-&gt;4)-alpha-D-glucosaminyl]-1-(1-radyl,2-acyl-sn-glycero-3-phospho)-1D-myo-inositol-binding residues include asparagine 465, aspartate 525, serine 527, and asparagine 531. Residues 530-552 (YNVICLTCTVVAVCYGSFYNLLT) form a helical membrane-spanning segment. Residues 553 to 582 (RTFHIEEPKSGGLAKRLANLIRRARGVPPL) are Cytoplasmic-facing.

This sequence belongs to the PIGT family. As to quaternary structure, heteropentamer. Part of the GPI-anchor transamidase complex, consisting of PIGK, PIGT, PIGS, PIGU and GAA1. Post-translationally, the disulfide bond between PIGK/GPI8 and PIGT is important for normal enzyme activity.

The protein localises to the endoplasmic reticulum membrane. It functions in the pathway glycolipid biosynthesis; glycosylphosphatidylinositol-anchor biosynthesis. Component of the glycosylphosphatidylinositol-anchor (GPI-anchor) transamidase (GPI-T) complex that catalyzes the formation of the linkage between a proprotein and a GPI-anchor and participates in GPI anchored protein biosynthesis. May play a crucial role in GPI-T complex assembly in the luminal layer. Binds GPI-anchor. The chain is GPI-anchor transamidase component PIGT from Mus musculus (Mouse).